The following is a 1496-amino-acid chain: Synaptojanin-2 (1496 aa).

One can recognise an SAC domain in the interval 120-444; that stretch reads LKKILSSGVF…GHGLSKVFTG (325 aa). The 80-residue stretch at 906–985 folds into the RRM domain; it reads DATVIVNLQS…RAVKIRPKTK (80 aa). Disordered regions lie at residues 1047–1083, 1100–1149, 1205–1357, 1393–1413, 1442–1461, and 1468–1496; these read VVSD…HPTY, GNFR…GTHG, VPES…LQVL, SSAI…AASF, EPLD…SAQV, and RGLP…TLGV. The span at 1063–1074 shows a compositional bias: low complexity; it reads SASTPASKSPAL. Residues 1116 to 1130 are compositionally biased toward pro residues; the sequence is RPRPPHPPQRPPPPT. Ser-1139 carries the post-translational modification Phosphoserine. A compositionally biased stretch (polar residues) spans 1139–1149; it reads SDASISSGTHG. Composition is skewed to pro residues over residues 1230 to 1239 and 1279 to 1292; these read PVLPRRPVPR and TPPP…PVPK. A compositionally biased stretch (low complexity) spans 1324–1338; sequence ELSSPEAPEAPSLAP. Composition is skewed to basic and acidic residues over residues 1470–1480 and 1487–1496; these read LPPDHGGKDFS and NKDKRTTLGV.

It belongs to the synaptojanin family. In the central section; belongs to the inositol 1,4,5-trisphosphate 5-phosphatase family. In terms of assembly, binds to GRB2. Isoform 2A binds to SYNJ2BP/OMP25. Widely expressed. Isoforms 2B1 and 2B2 are concentrated at nerve terminals in brain and at spermatid manchette in testis.

The protein localises to the cytoplasm. The protein resides in the cell membrane. Its subcellular location is the presynapse. It localises to the cytoskeleton. It is found in the membrane raft. The protein localises to the mitochondrion. It carries out the reaction a 1,2-diacyl-sn-glycero-3-phospho-(1D-myo-inositol-4,5-bisphosphate) + H2O = a 1,2-diacyl-sn-glycero-3-phospho-(1D-myo-inositol 4-phosphate) + phosphate. In terms of biological role, inositol 5-phosphatase which may be involved in distinct membrane trafficking and signal transduction pathways. May mediate the inhibitory effect of Rac1 on endocytosis. This chain is Synaptojanin-2 (Synj2), found in Rattus norvegicus (Rat).